Here is a 424-residue protein sequence, read N- to C-terminus: Phosphomethylpyrimidine synthase 2 (424 aa).

Substrate-binding positions include Asn65, Met94, Tyr123, His162, 184–186 (SRG), 225–228 (DGLR), and Glu264. Residue His268 coordinates Zn(2+). Tyr291 serves as a coordination point for substrate. Zn(2+) is bound at residue His332. [4Fe-4S] cluster-binding residues include Cys408, Cys411, and Cys415.

This sequence belongs to the ThiC family. The cofactor is [4Fe-4S] cluster.

The catalysed reaction is 5-amino-1-(5-phospho-beta-D-ribosyl)imidazole + S-adenosyl-L-methionine = 4-amino-2-methyl-5-(phosphooxymethyl)pyrimidine + CO + 5'-deoxyadenosine + formate + L-methionine + 3 H(+). The protein operates within cofactor biosynthesis; thiamine diphosphate biosynthesis. In terms of biological role, catalyzes the synthesis of the hydroxymethylpyrimidine phosphate (HMP-P) moiety of thiamine from aminoimidazole ribotide (AIR) in a radical S-adenosyl-L-methionine (SAM)-dependent reaction. This chain is Phosphomethylpyrimidine synthase 2, found in Methanothermobacter thermautotrophicus (strain ATCC 29096 / DSM 1053 / JCM 10044 / NBRC 100330 / Delta H) (Methanobacterium thermoautotrophicum).